The primary structure comprises 40 residues: Large ribosomal subunit protein bL36 (40 aa).

It belongs to the bacterial ribosomal protein bL36 family.

This is Large ribosomal subunit protein bL36 from Corynebacterium urealyticum (strain ATCC 43042 / DSM 7109).